The primary structure comprises 77 residues: U8-lycotoxin-Ls1m (77 aa).

The N-terminal stretch at 1 to 20 (MKLIIFTGLVLFSIVSLIEA) is a signal peptide. Residues 21-26 (QAENEK) constitute a propeptide that is removed on maturation.

It belongs to the neurotoxin 19 (CSTX) family. 08 (U8-Lctx) subfamily. Contains 4 disulfide bonds. In terms of tissue distribution, expressed by the venom gland.

It localises to the secreted. This is U8-lycotoxin-Ls1m from Lycosa singoriensis (Wolf spider).